Reading from the N-terminus, the 591-residue chain is L-fucose isomerase (591 aa).

Active-site proton acceptor residues include Glu-337 and Asp-361. Mn(2+) is bound by residues Glu-337, Asp-361, and His-528.

It belongs to the L-fucose isomerase family. Homohexamer. Requires Mn(2+) as cofactor.

The protein resides in the cytoplasm. It carries out the reaction L-fucose = L-fuculose. It functions in the pathway carbohydrate degradation; L-fucose degradation; L-lactaldehyde and glycerone phosphate from L-fucose: step 1/3. Converts the aldose L-fucose into the corresponding ketose L-fuculose. The sequence is that of L-fucose isomerase from Escherichia coli (strain UTI89 / UPEC).